We begin with the raw amino-acid sequence, 546 residues long: Pre-mRNA-splicing factor 38B (546 aa).

Over residues 1–14 (MANNSPALTGNSQP) the composition is skewed to polar residues. The tract at residues 1 to 40 (MANNSPALTGNSQPQHQAAAAAAQQQQQCGGGGATKPAVS) is disordered. A2 is modified (N-acetylalanine). The residue at position 5 (S5) is a Phosphoserine. Positions 15–28 (QHQAAAAAAQQQQQ) are enriched in low complexity. K227 carries the post-translational modification N6-acetyllysine. A disordered region spans residues 229-546 (IDQQIKTRPR…KQHKNKDETV (318 aa)). Over residues 243-255 (DGKEGAEEIDRHV) the composition is skewed to basic and acidic residues. The segment covering 256–284 (ERRRSRSPRRSLSPRRSPRRSRSRSHHRE) has biased composition (basic residues). 4 positions are modified to phosphoserine: S288, S290, S318, and S320. Basic and acidic residues predominate over residues 291–327 (FDRELEREKERQRLEREAKEREKERRRSRSIDRGLER). A coiled-coil region spans residues 292 to 321 (DRELEREKERQRLEREAKEREKERRRSRSI). The segment covering 328–344 (RRSRSRERHRSRSRSRD) has biased composition (basic residues). The segment covering 345–421 (RKGDRRDRDR…HRDDKRDSKK (77 aa)) has biased composition (basic and acidic residues). Over residues 422-450 (EKKHSRSRSRERKHRSRSRSRNAGKRSRS) the composition is skewed to basic residues. S448 is subject to Phosphoserine. A compositionally biased stretch (basic and acidic residues) spans 451 to 468 (RSKEKSSKHKNESKEKSN). 3 positions are modified to phosphoserine: S473, S475, and S481. Residues 480–495 (DSVEKSKKREHSPSKE) are compositionally biased toward basic and acidic residues. Positions 496-510 (KSRKRSRSKERSHKR) are enriched in basic residues. Residues 511-546 (DHSDSKDQSDKHDRRRSQSIEQESQEKQHKNKDETV) show a composition bias toward basic and acidic residues. 3 positions are modified to phosphoserine: S527, S529, and S534.

It belongs to the PRP38 family.

It localises to the nucleus. Functionally, may be required for pre-mRNA splicing. The sequence is that of Pre-mRNA-splicing factor 38B (PRPF38B) from Homo sapiens (Human).